A 419-amino-acid polypeptide reads, in one-letter code: Tyrosine--tRNA ligase (419 aa).

L-tyrosine is bound at residue Tyr36. Positions 41–50 match the 'HIGH' region motif; it reads PTGDSMHIGH. 2 residues coordinate L-tyrosine: Tyr168 and Gln172. A 'KMSKS' region motif is present at residues 230-234; that stretch reads KFGKT. Lys233 lines the ATP pocket. An S4 RNA-binding domain is found at 352–419; sequence KNIVDFLVDA…KKKYFLARVK (68 aa).

Belongs to the class-I aminoacyl-tRNA synthetase family. TyrS type 1 subfamily. Homodimer.

It localises to the cytoplasm. The catalysed reaction is tRNA(Tyr) + L-tyrosine + ATP = L-tyrosyl-tRNA(Tyr) + AMP + diphosphate + H(+). Its function is as follows. Catalyzes the attachment of tyrosine to tRNA(Tyr) in a two-step reaction: tyrosine is first activated by ATP to form Tyr-AMP and then transferred to the acceptor end of tRNA(Tyr). The chain is Tyrosine--tRNA ligase from Latilactobacillus sakei subsp. sakei (strain 23K) (Lactobacillus sakei subsp. sakei).